Here is a 79-residue protein sequence, read N- to C-terminus: Major outer membrane lipoprotein Lpp 2 (79 aa).

An N-terminal signal peptide occupies residues 1 to 21 (MNRTNQLILGAVVLGSTLLAG). Cys22 carries the N-palmitoyl cysteine lipid modification. Cys22 carries the S-diacylglycerol cysteine lipid modification. 2 repeats span residues 25–35 (NAKIDQLSSDV) and 39–49 (SAKVEQLSNDV). A coiled-coil region spans residues 28–69 (IDQLSSDVQTLSAKVEQLSNDVNAMRSDVQAAKDDAARANQR). The residue at position 79 (Lys79) is an N6-murein peptidoglycan lysine.

This sequence belongs to the Lpp family. As to quaternary structure, homotrimer.

It localises to the cell outer membrane. The protein localises to the secreted. Its subcellular location is the cell wall. Plays an important role in virulence. A highly abundant outer membrane lipoprotein that controls the distance between the inner and outer membranes. The only protein known to be covalently linked to the peptidoglycan network (PGN). Also non-covalently binds the PGN. The link between the cell outer membrane and PGN contributes to maintenance of the structural and functional integrity of the cell envelope, and maintains the correct distance between the PGN and the outer membrane. This Salmonella typhimurium (strain LT2 / SGSC1412 / ATCC 700720) protein is Major outer membrane lipoprotein Lpp 2.